A 144-amino-acid chain; its full sequence is Large ribosomal subunit protein uL16 (144 aa).

It belongs to the universal ribosomal protein uL16 family. In terms of assembly, part of the 50S ribosomal subunit.

Binds 23S rRNA and is also seen to make contacts with the A and possibly P site tRNAs. This is Large ribosomal subunit protein uL16 from Lactiplantibacillus plantarum (strain ATCC BAA-793 / NCIMB 8826 / WCFS1) (Lactobacillus plantarum).